Reading from the N-terminus, the 442-residue chain is Galactose/N-acetylgalactosamine-binding lectin CEL-III (442 aa).

Residues 1–10 (MVSLVPCGFA) constitute a propeptide, removed in mature form. Position 11 is a pyrrolidone carboxylic acid (Q11). Residues 11–304 (QVLCTNPLDI…DWEVPTATWN (294 aa)) form a has hemagglutinating activity towards rabbit erythrocytes, but no hemolytic activity towards them region. 3 disulfides stabilise this stretch: C14-C59, C31-C48, and C72-C88. Residues D19 and 33–36 (DIVG) contribute to the D-galactose site. Ricin B-type lectin domains lie at 28–102 (SKQC…RWRL) and 115–245 (EQVA…WSRP). Residues D33, I34, and G36 each coordinate Ca(2+). Residues N42 and I43 each contribute to the Mg(2+) site. D49 is a binding site for D-galactose. A Ca(2+)-binding site is contributed by D53. The Mg(2+) site is built by N82 and V83. D-galactose contacts are provided by residues V117 and 131–134 (DVEG). Residues C129 and C146 are joined by a disulfide bond. Ca(2+) contacts are provided by D131, V132, and G134. Position 141 (I141) interacts with Mg(2+). 144–147 (YDCQ) is a D-galactose binding site. The Ca(2+) site is built by D151, D178, V179, and G181. A disulfide bridge links C176 with C193. Residue 178-181 (DVEG) participates in D-galactose binding. Positions 187 and 188 each coordinate Mg(2+). 191–194 (YSCE) contacts D-galactose. Residues D198, D219, V220, and G222 each contribute to the Ca(2+) site. C217 and C234 are disulfide-bonded. 219-222 (DVEG) is a D-galactose binding site. 2 residues coordinate Mg(2+): N228 and V229. 232-235 (YRCD) contacts D-galactose. Position 239 (D239) interacts with Ca(2+). 2 cysteine pairs are disulfide-bonded: C249–C254 and C264–C281. One can recognise a Ricin B-type lectin 3 domain in the interval 261–293 (SNKCLDVSGDQGTGDVGTWQCDGLPDQRFKWVF). Ca(2+)-binding residues include D266, V267, and G269. Residue 266–269 (DVSG) participates in D-galactose binding. 2 residues coordinate Mg(2+): D275 and V276. Residues 279–282 (WQCD) and D286 each bind D-galactose. D286 is a Ca(2+) binding site. Residues 294–442 (DDWEVPTATW…NEDCTFCTDI (149 aa)) are has a strong tendency to self-associate leading to formation of oligomers. Cystine bridges form between C308–C390, C377–C416, C425–C439, and C431–C436.

As to quaternary structure, oligomerizes in the human and rabbit erythrocyte membranes. Oligomerization is induced by binding of beta-1,4-linked disaccharide ligands such as lactose, lactulose, N-acetyllactosamine and phenyl-beta-D-galactoside, but only a little by N-acetylgalactosamine and galactose, and not at all by melibiose in aqueous solution in the presence of high salt concentration and pH 10. Forms heptamers that assemble into larger 21mer oligomers, which may be inserted as a transmembrane pore to the erythrocyte membrane. Requires Ca(2+) as cofactor. The cofactor is Mg(2+). As to expression, expressed in body fluid (at protein level).

It localises to the secreted. Ca(2+) is required for hemolytic activity and the activity increases with increasing calcium concentration. Hemolytic activity is inhibited by N-acetylgalactosamine (GalNAc), lactose, lactulose, galactosamine, dextran with molecular masses greater than 4 kDa, to a lesser extent by inulin and only slightly by sucrose and melezitose, but not by glucose or mannose. The activity is abolished in the presence of 10 mM EDTA. Lactose-binding increases with increasing calcium concentration, but calcium has no effect on hemagglutinating activity. Cytotoxic effect on Madin-Darby canine kidney (MDCK) cell line is strongly inhibited by galactose, lactose and N-acetylgalactosamine (GalNAc), but not by raffinose, N-acetylglucosamine (GlcNAc), glucose, mannose, ribose or sucrose. Pore formation in artificial lactosyl ceramide (LacCer) or globotetraosylceramide (Gb4Cer) containing liposomes is strongly inhibited by lactose. Functionally, galactose/N-acetylgalactosamine (Gal/GalNAc)-binding lectin with hemolytic activity. Favors saccharides that have a beta-1,4 linkage at the non-reducing end rather than saccharides having alpha-1,6 or alpha-1,4 linkages. Binds lactose, lactulose, GalNAc, galactosamine, methyl alpha-galactopyranoside, methyl beta-galactopyranoside, N-acetyllactosamine, p-nitrophenyl beta-D-galactopyranoside (pNP-Gal), p-nitrophenyl N-acetyl-beta-D-galactosaminide (pNP-GalNAc), asialofetuin, and human erythrocyte membrane lipids lactosyl ceramide (LacCer) and globoside globotetraosylceramide (Gb4Cer). Binds moderately to galactose, melibiose, raffinose, fucose, methyl alpha-galactoside and methyl beta-galactoside. Binds weakly to glucose, mannose and N-acetylglucosamine (GlcNAc). Has hemolytic activity towards human (A, B and O-type), rabbit and rat erythrocytes, but not towards mouse, chicken or horse erythrocytes. Forms ion-permeable transmembrane pores in the erythrocyte membrane as well as in artificial liposomes containing human erythrocyte membrane lipids LacCer, Gb4Cer and galactosyl ceramide (GalCer) leading to destruction of the membrane. Has hemagglutinating activity towards rabbit, human and rat erythrocytes, and at relatively high concentrations towards chicken and horse erythrocytes, but not towards mouse erythrocytes. Has dose-dependent cytotoxic effect on Madin-Darby canine kidney (MDCK), African green monkey kidney (Vero) and human epithelia carcinoma (HeLa) cell lines, but Chinese hamster ovary (CHO), rat sarcoma (XC) and potoroo rat kangaroo kidney (PtK1) cells are highly resistant to the cytotoxic effect of this protein. Impairs malaria parasite development in malaria parasite infected transgenic A.stephensi mosquitoes expressing this protein specifically in their midguts. Binds to ookinetes and leads to strong dose-dependent inhibition of ookinete formation in vitro. Leads to severely impaired oocyst formation and significantly reduced sporozoite production of rodent malaria parasite P.berghei in the salivary glands of the transgenic mosquitoes. The parasite transmission to uninfected mice (vectorial competence) of these mosquitoes is significantly impaired. Also leads to severely impaired oocyst formation of human malaria parasite P.falciparum in transgenic mosquitoes fed on mature P.falciparum gametocyte cultures. May be involved in defense mechanisms acting as a toxic protein to foreign microorganisms. May act in defense against predators. The chain is Galactose/N-acetylgalactosamine-binding lectin CEL-III from Pseudocnus echinatus (Sea cucumber).